The following is a 135-amino-acid chain: METKNLTIGERIRYRRKNLKHTQRSLAKALKISHVSVSQWERGDSEPTGKNLFALSKVLQCSPTWILFGDEDKQPTPPVEKPVALSPKELELLELFNALPESEQDTQLAEMRARVKNFNKLFEELLKARQRTNKR.

The HTH cro/C1-type domain maps to 12 to 66 (IRYRRKNLKHTQRSLAKALKISHVSVSQWERGDSEPTGKNLFALSKVLQCSPTWI). A DNA-binding region (H-T-H motif) is located at residues 23–42 (QRSLAKALKISHVSVSQWER).

Functionally, this protein is a repressor of division inhibition gene dicB. This Escherichia coli (strain K12) protein is HTH-type transcriptional regulator DicA (dicA).